Reading from the N-terminus, the 282-residue chain is 4-hydroxy-3-methylbut-2-enyl diphosphate reductase (282 aa).

Residue Cys-14 participates in [4Fe-4S] cluster binding. Positions 43 and 78 each coordinate (2E)-4-hydroxy-3-methylbut-2-enyl diphosphate. Positions 43 and 78 each coordinate dimethylallyl diphosphate. Isopentenyl diphosphate contacts are provided by His-43 and His-78. A [4Fe-4S] cluster-binding site is contributed by Cys-100. (2E)-4-hydroxy-3-methylbut-2-enyl diphosphate is bound at residue His-128. His-128 serves as a coordination point for dimethylallyl diphosphate. His-128 contacts isopentenyl diphosphate. The active-site Proton donor is Glu-130. Residue Thr-164 coordinates (2E)-4-hydroxy-3-methylbut-2-enyl diphosphate. [4Fe-4S] cluster is bound at residue Cys-192. Residues Ser-220, Ser-221, Asn-222, and Ser-266 each coordinate (2E)-4-hydroxy-3-methylbut-2-enyl diphosphate. Dimethylallyl diphosphate-binding residues include Ser-220, Ser-221, Asn-222, and Ser-266. Ser-220, Ser-221, Asn-222, and Ser-266 together coordinate isopentenyl diphosphate.

Belongs to the IspH family. Requires [4Fe-4S] cluster as cofactor.

It catalyses the reaction isopentenyl diphosphate + 2 oxidized [2Fe-2S]-[ferredoxin] + H2O = (2E)-4-hydroxy-3-methylbut-2-enyl diphosphate + 2 reduced [2Fe-2S]-[ferredoxin] + 2 H(+). The catalysed reaction is dimethylallyl diphosphate + 2 oxidized [2Fe-2S]-[ferredoxin] + H2O = (2E)-4-hydroxy-3-methylbut-2-enyl diphosphate + 2 reduced [2Fe-2S]-[ferredoxin] + 2 H(+). It participates in isoprenoid biosynthesis; dimethylallyl diphosphate biosynthesis; dimethylallyl diphosphate from (2E)-4-hydroxy-3-methylbutenyl diphosphate: step 1/1. The protein operates within isoprenoid biosynthesis; isopentenyl diphosphate biosynthesis via DXP pathway; isopentenyl diphosphate from 1-deoxy-D-xylulose 5-phosphate: step 6/6. In terms of biological role, catalyzes the conversion of 1-hydroxy-2-methyl-2-(E)-butenyl 4-diphosphate (HMBPP) into a mixture of isopentenyl diphosphate (IPP) and dimethylallyl diphosphate (DMAPP). Acts in the terminal step of the DOXP/MEP pathway for isoprenoid precursor biosynthesis. The polypeptide is 4-hydroxy-3-methylbut-2-enyl diphosphate reductase (Clostridium perfringens (strain ATCC 13124 / DSM 756 / JCM 1290 / NCIMB 6125 / NCTC 8237 / Type A)).